Consider the following 184-residue polypeptide: Copper transporter 6 (184 aa).

The span at 1-25 (MRGMGDDGMGPMAMAPPRSGHATAA) shows a compositional bias: low complexity. A disordered region spans residues 1 to 27 (MRGMGDDGMGPMAMAPPRSGHATAAAP). The next 2 membrane-spanning stretches (helical) occupy residues 64-84 (YALCLLFVLALAALTEGLSVL) and 124-144 (MAYLVMLAVMSFNVGVLLAAV).

Belongs to the copper transporter (Ctr) (TC 1.A.56) family. SLC31A subfamily.

The protein resides in the membrane. Involved in the transport of copper. The sequence is that of Copper transporter 6 (COPT6) from Oryza sativa subsp. japonica (Rice).